The primary structure comprises 121 residues: UPF0344 protein BCA_1194 (121 aa).

4 consecutive transmembrane segments (helical) span residues isoleucine 6–glycine 26, leucine 38–alanine 58, tryptophan 65–valine 85, and alanine 92–leucine 112.

This sequence belongs to the UPF0344 family.

The protein resides in the cell membrane. The polypeptide is UPF0344 protein BCA_1194 (Bacillus cereus (strain 03BB102)).